Here is a 388-residue protein sequence, read N- to C-terminus: S-adenosylmethionine synthase (388 aa).

Position 17 (H17) interacts with ATP. D19 contributes to the Mg(2+) binding site. A K(+)-binding site is contributed by E45. Residues E58 and Q106 each contribute to the L-methionine site. The interval 106-116 is flexible loop; the sequence is QSAHIAQGVDK. ATP contacts are provided by residues 166-168, D241, 247-248, A264, and K268; these read DAK and RK. An L-methionine-binding site is contributed by D241. Residue K272 participates in L-methionine binding.

It belongs to the AdoMet synthase family. Homotetramer; dimer of dimers. Mg(2+) is required as a cofactor. The cofactor is K(+).

Its subcellular location is the cytoplasm. The catalysed reaction is L-methionine + ATP + H2O = S-adenosyl-L-methionine + phosphate + diphosphate. It participates in amino-acid biosynthesis; S-adenosyl-L-methionine biosynthesis; S-adenosyl-L-methionine from L-methionine: step 1/1. Functionally, catalyzes the formation of S-adenosylmethionine (AdoMet) from methionine and ATP. The overall synthetic reaction is composed of two sequential steps, AdoMet formation and the subsequent tripolyphosphate hydrolysis which occurs prior to release of AdoMet from the enzyme. The protein is S-adenosylmethionine synthase of Cereibacter sphaeroides (strain ATCC 17023 / DSM 158 / JCM 6121 / CCUG 31486 / LMG 2827 / NBRC 12203 / NCIMB 8253 / ATH 2.4.1.) (Rhodobacter sphaeroides).